We begin with the raw amino-acid sequence, 313 residues long: B3 domain-containing transcription factor FUS3 (313 aa).

The TF-B3 DNA-binding region spans phenylalanine 92 to serine 194.

Interacts with KIN10. Post-translationally, phosphorylation by KIN10 increases its stability. Phosphorylated at one or more of the Ser-55, Ser-56 and/or Ser-57 residues. As to expression, expressed in cotyledons and hypocotyls.

The protein localises to the nucleus. Phosphorylation by KIN10 is required to positively regulates embryogenesis, seed yield, and plant growth at high temperature. Transcription regulator involved in gene regulation during late embryogenesis. Its expression to the epidermis is sufficient to control foliar organ identity by regulating positively the synthesis abscisic acid (ABA) and negatively gibberellin production. Negatively regulates TTG1 in the embryo. Positively regulates the abundance of the ABI3 protein in the seed. Cooperates with KIN10 to regulate developmental phase transitions and lateral organ development and act both as positive regulators of abscisic acid (ABA) signaling during germination. The polypeptide is B3 domain-containing transcription factor FUS3 (FUS3) (Arabidopsis thaliana (Mouse-ear cress)).